The chain runs to 170 residues: Nucleoside-triphosphatase THEP1 (170 aa).

ATP contacts are provided by residues 7-14 and 98-105; these read GMPGVGKT and IIIIDELG.

It belongs to the THEP1 NTPase family.

The enzyme catalyses a ribonucleoside 5'-triphosphate + H2O = a ribonucleoside 5'-diphosphate + phosphate + H(+). In terms of biological role, has nucleotide phosphatase activity towards ATP, GTP, CTP, TTP and UTP. May hydrolyze nucleoside diphosphates with lower efficiency. This chain is Nucleoside-triphosphatase THEP1, found in Methanocaldococcus jannaschii (strain ATCC 43067 / DSM 2661 / JAL-1 / JCM 10045 / NBRC 100440) (Methanococcus jannaschii).